A 516-amino-acid polypeptide reads, in one-letter code: GMP synthase [glutamine-hydrolyzing] (516 aa).

Residues 5-199 form the Glutamine amidotransferase type-1 domain; the sequence is SIIVLDFGSQ…ARNICGVTEK (195 aa). Catalysis depends on Cys-82, which acts as the Nucleophile. Residues His-173 and Glu-175 contribute to the active site. The GMPS ATP-PPase domain maps to 200–391; it reads WKMEHFLKEQ…LGLPESMINR (192 aa). An ATP-binding site is contributed by 227-233; sequence SGGVDSS.

As to quaternary structure, homodimer.

The catalysed reaction is XMP + L-glutamine + ATP + H2O = GMP + L-glutamate + AMP + diphosphate + 2 H(+). Its pathway is purine metabolism; GMP biosynthesis; GMP from XMP (L-Gln route): step 1/1. Functionally, catalyzes the synthesis of GMP from XMP. This is GMP synthase [glutamine-hydrolyzing] from Sulfurimonas denitrificans (strain ATCC 33889 / DSM 1251) (Thiomicrospira denitrificans (strain ATCC 33889 / DSM 1251)).